The primary structure comprises 249 residues: MAPSRKFFVGGNWKMNGRKNNLGELINTLNAAKVPADTEVVCAPPTAYIDFARQKLDPKIAVAAQNCYKVANGAFTGEISPGMIKDLGATWVVLGHSERRHVFGESDELIGQKVAHALAEGLGVIACIGEKLDEREAGITEKVVFEQTKVIADNVKDWSKVVLAYEPVWAIGTGKTATPQQAQEVHEKLRGWLKSNVSDAVAQSARIIYGGSVTGATCKELASQPDVDGFLVGGASLKPEFVDIINAKQ.

Asn-12 and Lys-14 together coordinate substrate. At Lys-14 the chain carries N6-acetyllysine. Position 68 is a 3'-nitrotyrosine (Tyr-68). Ser-80 is subject to Phosphoserine. The Electrophile role is filled by His-96. Phosphoserine is present on Ser-106. Lys-142 is covalently cross-linked (Glycyl lysine isopeptide (Lys-Gly) (interchain with G-Cter in SUMO1)). Lys-149 carries the N6-succinyllysine modification. Residue Lys-156 is modified to N6-acetyllysine; alternate. Lys-156 carries the post-translational modification N6-succinyllysine; alternate. Residue Ser-159 is modified to Phosphoserine. The Proton acceptor role is filled by Glu-166. Thr-173 carries the phosphothreonine modification. N6-acetyllysine; alternate is present on Lys-194. Lys-194 carries the N6-succinyllysine; alternate modification. At Lys-194 the chain carries N6-methyllysine; alternate. Residue Ser-198 is modified to Phosphoserine. Tyr-209 is subject to 3'-nitrotyrosine. Position 212 is a phosphoserine (Ser-212). A Phosphothreonine modification is found at Thr-214. Position 223 is a phosphoserine (Ser-223). Residue Lys-238 is modified to N6-acetyllysine.

Belongs to the triosephosphate isomerase family. In terms of assembly, homodimer.

It is found in the cytoplasm. It carries out the reaction dihydroxyacetone phosphate = methylglyoxal + phosphate. The enzyme catalyses D-glyceraldehyde 3-phosphate = dihydroxyacetone phosphate. The protein operates within carbohydrate degradation; glycolysis; D-glyceraldehyde 3-phosphate from glycerone phosphate: step 1/1. It functions in the pathway carbohydrate biosynthesis; gluconeogenesis. In terms of biological role, triosephosphate isomerase is an extremely efficient metabolic enzyme that catalyzes the interconversion between dihydroxyacetone phosphate (DHAP) and D-glyceraldehyde-3-phosphate (G3P) in glycolysis and gluconeogenesis. It is also responsible for the non-negligible production of methylglyoxal a reactive cytotoxic side-product that modifies and can alter proteins, DNA and lipids. This is Triosephosphate isomerase (TPI1) from Bos taurus (Bovine).